Reading from the N-terminus, the 146-residue chain is Protein STIG1 (146 aa).

The N-terminal stretch at 1–23 (MAFINLLILIILTLSSTPITTMS) is a signal peptide. Asn31, Asn61, and Asn84 each carry an N-linked (GlcNAc...) asparagine glycan.

Belongs to the STIG1 family. Glycosylated. As to expression, expressed exclusively in the stigmatic secretory zone.

Its subcellular location is the secreted. In terms of biological role, involved in the temporal regulation of the exudate secretion onto the stigma. The sequence is that of Protein STIG1 from Nicotiana tabacum (Common tobacco).